Consider the following 121-residue polypeptide: Natriuretic peptides B (121 aa).

A signal peptide spans 1-26 (MDLQKVLPQMILLLLFLNLSPLGGHS). A disulfide bridge connects residues C99 and C115.

It belongs to the natriuretic peptide family. The precursor molecule is proteolytically cleaved by the endoprotease Furin to produce brain natriuretic peptide 45. May undergo further proteolytic cleavage by various proteases such as DPP4, MME and possibly FAP, to give rise to a variety of shorter peptides. May be cleaved at Ser-91 by the prolyl endopeptidase FAP (seprase) activity (in vitro). May be degraded by IDE. During IDE degradation, the resulting products initially increase the activation of NPR1 and can also stimulate NPR2 to produce cGMP before the fragments are completely degraded and inactivated by IDE (in vitro). As to expression, expressed in the atria and ventricles, but at much lower levels than NPPA. Expression levels in the ventricles are slightly higher than in the atria. Very low levels of expression detected in the brain, hypothalamus, lung and aorta. Atria (at protein level). Cardiocytes (at protein level).

The protein resides in the secreted. In terms of biological role, cardiac hormone that plays a key role in mediating cardio-renal homeostasis. May also function as a paracrine antifibrotic factor in the heart. Acts by specifically binding and stimulating NPR1 to produce cGMP, which in turn activates effector proteins that drive various biological responses. Likely involved in regulating the extracellular fluid volume and maintaining the fluid-electrolyte balance through natriuresis, diuresis, kaluresis and chloruresis. The chain is Natriuretic peptides B (Nppb) from Rattus norvegicus (Rat).